Here is a 193-residue protein sequence, read N- to C-terminus: Fra a 1-associated protein (193 aa).

The tract at residues 1-27 (MGWVWKDDDEQGGHVNPSAADISPRLD) is disordered.

In terms of assembly, interacts with FRAA1E, FRAA2 and FRAA3.

This chain is Fra a 1-associated protein, found in Fragaria ananassa (Strawberry).